The following is a 385-amino-acid chain: ATP phosphoribosyltransferase regulatory subunit (385 aa).

This sequence belongs to the class-II aminoacyl-tRNA synthetase family. HisZ subfamily. Heteromultimer composed of HisG and HisZ subunits.

It is found in the cytoplasm. Its pathway is amino-acid biosynthesis; L-histidine biosynthesis; L-histidine from 5-phospho-alpha-D-ribose 1-diphosphate: step 1/9. Required for the first step of histidine biosynthesis. May allow the feedback regulation of ATP phosphoribosyltransferase activity by histidine. The chain is ATP phosphoribosyltransferase regulatory subunit from Bordetella avium (strain 197N).